The sequence spans 181 residues: UPF0232 protein MAP_0004 (181 aa).

The span at 1–11 (MSDDQSPSPSG) shows a compositional bias: polar residues. 2 disordered regions span residues 1–70 (MSDD…PQPL) and 161–181 (APSW…DTYG). Residues 18–39 (LVRRTLEEARAAARAQGKDAGR) show a composition bias toward basic and acidic residues. The span at 40 to 50 (GRAAAPTPRRV) shows a compositional bias: low complexity.

It belongs to the UPF0232 family.

The chain is UPF0232 protein MAP_0004 from Mycolicibacterium paratuberculosis (strain ATCC BAA-968 / K-10) (Mycobacterium paratuberculosis).